The primary structure comprises 425 residues: CinA-like protein (425 aa).

This sequence belongs to the CinA family.

The polypeptide is CinA-like protein (Shewanella sp. (strain MR-4)).